A 146-amino-acid polypeptide reads, in one-letter code: D-aminoacyl-tRNA deacylase (146 aa).

The Gly-cisPro motif, important for rejection of L-amino acids signature appears at 137–138 (GP).

This sequence belongs to the DTD family. Homodimer.

Its subcellular location is the cytoplasm. The enzyme catalyses glycyl-tRNA(Ala) + H2O = tRNA(Ala) + glycine + H(+). It carries out the reaction a D-aminoacyl-tRNA + H2O = a tRNA + a D-alpha-amino acid + H(+). Functionally, an aminoacyl-tRNA editing enzyme that deacylates mischarged D-aminoacyl-tRNAs. Also deacylates mischarged glycyl-tRNA(Ala), protecting cells against glycine mischarging by AlaRS. Acts via tRNA-based rather than protein-based catalysis; rejects L-amino acids rather than detecting D-amino acids in the active site. By recycling D-aminoacyl-tRNA to D-amino acids and free tRNA molecules, this enzyme counteracts the toxicity associated with the formation of D-aminoacyl-tRNA entities in vivo and helps enforce protein L-homochirality. The polypeptide is D-aminoacyl-tRNA deacylase (Bacillus cytotoxicus (strain DSM 22905 / CIP 110041 / 391-98 / NVH 391-98)).